A 170-amino-acid chain; its full sequence is Ureidoglycolate lyase (170 aa).

It belongs to the ureidoglycolate lyase family. In terms of assembly, homodimer. Ni(2+) serves as cofactor.

The enzyme catalyses (S)-ureidoglycolate = urea + glyoxylate. Its pathway is nitrogen metabolism; (S)-allantoin degradation. Catalyzes the catabolism of the allantoin degradation intermediate (S)-ureidoglycolate, generating urea and glyoxylate. Involved in the utilization of allantoin as nitrogen source. This Pseudomonas savastanoi pv. phaseolicola (strain 1448A / Race 6) (Pseudomonas syringae pv. phaseolicola (strain 1448A / Race 6)) protein is Ureidoglycolate lyase.